Consider the following 1019-residue polypeptide: Probable inorganic carbon transporter subunit DabA 1 (1019 aa).

Zn(2+) contacts are provided by Cys491 and Asp493. Residues 624–643 (VPTRLHSPRDEGSAAGGEGQ) are disordered. 2 residues coordinate Zn(2+): His676 and Cys691.

It belongs to the inorganic carbon transporter (TC 9.A.2) DabA family. In terms of assembly, forms a complex with DabB. Zn(2+) serves as cofactor.

The protein resides in the cell inner membrane. In terms of biological role, part of an energy-coupled inorganic carbon pump. This is Probable inorganic carbon transporter subunit DabA 1 from Sorangium cellulosum (strain So ce56) (Polyangium cellulosum (strain So ce56)).